A 326-amino-acid polypeptide reads, in one-letter code: MGTEKEEPDCQKQFQAAVSVIQNLPKNGSYRPSYEEMLRFYSYYKQATAGPCLVPRPGFWDPIGRYKWDAWNSLGKMSREEAMSAYITEMKLVAQKVIDTVPLGEVAEDMFGYFEPLYQVIPDMPRPPETFLRRVTGWQEPAVNRDVQAAPEPSHPPKEPAPPSPESRLPRDLDLEVFCDSVEQLEPELVRVPVLSPVPAESELPHLHTGTGDSAQRVWAEQKEAAGRELTTRSSPESPEGFGGSLMGPQELDRWLVGTVQAMQESMKDVHRRLQILESKPQPLEQQRSPRTRPWPLGLSTPTLLFFILWPFVVQWLFRQFRTQRR.

Residues 10 to 99 enclose the ACB domain; sequence CQKQFQAAVS…MKLVAQKVID (90 aa). An acyl-CoA contacts are provided by residues 21 to 30, 41 to 45, Lys67, and Tyr86; these read IQNLPKNGSY and YSYYK. 2 disordered regions span residues 147–170 and 223–248; these read VQAAPEPSHPPKEPAPPSPESRLP and KEAAGRELTTRSSPESPEGFGGSLMG. Ser164 bears the Phosphoserine mark.

Functionally, binds medium- and long-chain acyl-CoA esters and may function as an intracellular carrier of acyl-CoA esters. This Rattus norvegicus (Rat) protein is Acyl-CoA-binding domain-containing protein 4 (Acbd4).